We begin with the raw amino-acid sequence, 225 residues long: Cytidylate kinase (225 aa).

12–20 (GPSGAGKGT) is an ATP binding site.

This sequence belongs to the cytidylate kinase family. Type 1 subfamily.

It localises to the cytoplasm. It catalyses the reaction CMP + ATP = CDP + ADP. The catalysed reaction is dCMP + ATP = dCDP + ADP. The sequence is that of Cytidylate kinase from Pectobacterium atrosepticum (strain SCRI 1043 / ATCC BAA-672) (Erwinia carotovora subsp. atroseptica).